Here is a 403-residue protein sequence, read N- to C-terminus: Serine/threonine transporter SstT (403 aa).

9 helical membrane passes run 16–36, 45–65, 79–99, 138–158, 175–195, 214–234, 295–315, 327–347, and 353–373; these read QIVI…AIAL, FVSA…MASI, ILWL…VASM, ALLN…GVAL, GVTL…FGLV, LAVL…LIVF, MAGA…TLGI, MVAA…LLLI, and LFGI…IIGV.

This sequence belongs to the dicarboxylate/amino acid:cation symporter (DAACS) (TC 2.A.23) family.

Its subcellular location is the cell inner membrane. It carries out the reaction L-serine(in) + Na(+)(in) = L-serine(out) + Na(+)(out). It catalyses the reaction L-threonine(in) + Na(+)(in) = L-threonine(out) + Na(+)(out). Functionally, involved in the import of serine and threonine into the cell, with the concomitant import of sodium (symport system). This is Serine/threonine transporter SstT from Pseudomonas putida (strain W619).